A 400-amino-acid chain; its full sequence is MKNKIKNKIKNPFLQFFKNESSSGIVLMFCAIIAIIIANSNFSSMYNNIIHTYITIGYKDFSLSMSILHWINDGLMAIFFLVVGMEIKREIVFGELKSFKKTILPVSAAIGGMVVPAIIYALFNFNQPTIIGWGIPMATDIAFALGILSLVGKKAPKGIIIFLTALAIVDDLGAIIVIAIFYTSEISWIALILGLIIFLAIILANKLNVKNKWLYIIFGIALWICFLKSGVHETIAGVLLGMGLPIGKNMEEFRTSILYRFEHVLTPLSSFIIMPIFALANSGITIDINSLSAAIMNPVSLGIIFGLFIGKQIGIFGASYILVKLKIAKLPSKVTKRHLYGASVLGGIGFTMSLFVSSLSFTEESALSMAKISIIIASILSAAFGAAIFKIIKFKNEERV.

A run of 11 helical transmembrane segments spans residues 25–45 (IVLM…FSSM), 67–87 (ILHW…GMEI), 103–123 (ILPV…YALF), 130–150 (IIGW…ILSL), 159–179 (IIIF…IVIA), 184–204 (SEIS…IILA), 213–233 (WLYI…GVHE), 264–284 (VLTP…NSGI), 303–323 (IIFG…YILV), 339–359 (LYGA…VSSL), and 372–392 (ISII…FKII).

The protein belongs to the NhaA Na(+)/H(+) (TC 2.A.33) antiporter family.

It is found in the cell membrane. It carries out the reaction Na(+)(in) + 2 H(+)(out) = Na(+)(out) + 2 H(+)(in). In terms of biological role, na(+)/H(+) antiporter that extrudes sodium in exchange for external protons. The polypeptide is Na(+)/H(+) antiporter NhaA 1 (Clostridium beijerinckii (strain ATCC 51743 / NCIMB 8052) (Clostridium acetobutylicum)).